The following is a 494-amino-acid chain: Alpha-amylase B (494 aa).

Positions 1–18 (MFLAKSIVCLALLAVANA) are cleaved as a signal peptide. The residue at position 19 (Gln-19) is a Pyrrolidone carboxylic acid. Cys-46 and Cys-102 are disulfide-bonded. Positions 116, 165, and 174 each coordinate Ca(2+). A disulfide bridge links Cys-153 with Cys-167. Chloride is bound at residue Arg-202. Asp-204 functions as the Nucleophile in the catalytic mechanism. His-208 is a binding site for Ca(2+). The active-site Proton donor is the Glu-241. 2 residues coordinate chloride: Asn-304 and Arg-343. 2 disulfide bridges follow: Cys-376–Cys-382 and Cys-448–Cys-460.

It belongs to the glycosyl hydrolase 13 family. Monomer. Requires Ca(2+) as cofactor. It depends on chloride as a cofactor.

The enzyme catalyses Endohydrolysis of (1-&gt;4)-alpha-D-glucosidic linkages in polysaccharides containing three or more (1-&gt;4)-alpha-linked D-glucose units.. The protein is Alpha-amylase B (Amy-d) of Drosophila yakuba (Fruit fly).